The sequence spans 162 residues: MFIDTSELCDLYAEQVDVVEPIFSSFGGVSNFYGKVTTVKCFESNGLIAEVLEENGEGRVLVIDGGGAVRRGLIDAELAQLAVDNGWEGIIVYGAVRQIQQLENLDIGIHALAPIPVSADESSAGESDIPVNFGGVTFFPEDYIYADLTGIILSQEPLDLED.

Belongs to the RraA family. Homotrimer. Binds to both RNA-binding sites in the C-terminal region of Rne and to RhlB.

Its subcellular location is the cytoplasm. Functionally, globally modulates RNA abundance by binding to RNase E (Rne) and regulating its endonucleolytic activity. Can modulate Rne action in a substrate-dependent manner by altering the composition of the degradosome. Modulates RNA-binding and helicase activities of the degradosome. The protein is Regulator of ribonuclease activity A of Haemophilus influenzae (strain ATCC 51907 / DSM 11121 / KW20 / Rd).